Here is a 486-residue protein sequence, read N- to C-terminus: UDP-N-acetylmuramate--L-alanine ligase (486 aa).

Residue 123–129 participates in ATP binding; it reads GTHGKTT.

It belongs to the MurCDEF family.

It is found in the cytoplasm. The enzyme catalyses UDP-N-acetyl-alpha-D-muramate + L-alanine + ATP = UDP-N-acetyl-alpha-D-muramoyl-L-alanine + ADP + phosphate + H(+). It functions in the pathway cell wall biogenesis; peptidoglycan biosynthesis. Cell wall formation. The sequence is that of UDP-N-acetylmuramate--L-alanine ligase from Pseudomonas savastanoi pv. phaseolicola (strain 1448A / Race 6) (Pseudomonas syringae pv. phaseolicola (strain 1448A / Race 6)).